A 116-amino-acid chain; its full sequence is Large ribosomal subunit protein bL17 (116 aa).

This sequence belongs to the bacterial ribosomal protein bL17 family. Part of the 50S ribosomal subunit. Contacts proteins L3 and L32.

Functionally, binds to the 23S rRNA. The sequence is that of Large ribosomal subunit protein bL17 from Deinococcus radiodurans (strain ATCC 13939 / DSM 20539 / JCM 16871 / CCUG 27074 / LMG 4051 / NBRC 15346 / NCIMB 9279 / VKM B-1422 / R1).